The sequence spans 395 residues: Elongation factor Tu (395 aa).

Residues 10–204 enclose the tr-type G domain; it reads KPHVNIGTIG…EVDAYIPTPE (195 aa). The G1 stretch occupies residues 19-26; that stretch reads GHVDHGKT. GTP is bound at residue 19–26; sequence GHVDHGKT. Residue threonine 26 coordinates Mg(2+). Positions 60–64 are G2; sequence GITIS. Residues 81–84 are G3; sequence DCPG. GTP is bound by residues 81-85 and 136-139; these read DCPGH and NKCD. The interval 136–139 is G4; the sequence is NKCD. The G5 stretch occupies residues 174–176; that stretch reads SAL.

The protein belongs to the TRAFAC class translation factor GTPase superfamily. Classic translation factor GTPase family. EF-Tu/EF-1A subfamily. In terms of assembly, monomer.

The protein resides in the cytoplasm. It carries out the reaction GTP + H2O = GDP + phosphate + H(+). Its function is as follows. GTP hydrolase that promotes the GTP-dependent binding of aminoacyl-tRNA to the A-site of ribosomes during protein biosynthesis. This is Elongation factor Tu from Bacillus anthracis (strain A0248).